Consider the following 600-residue polypeptide: Mitoguardin 1 (600 aa).

A run of 2 helical transmembrane segments spans residues 15–32 and 38–58; these read TYAV…YSLS and PVAK…IFLA. A phosphoserine mark is found at S257 and S261.

This sequence belongs to the mitoguardin family. In terms of assembly, homodimer and heterodimer; forms heterodimers with MIGA2. Interacts with PLD6/MitoPLD.

It is found in the mitochondrion outer membrane. Its function is as follows. Regulator of mitochondrial fusion. Acts by forming homo- and heterodimers at the mitochondrial outer membrane and facilitating the formation of PLD6/MitoPLD dimers. May act by regulating phospholipid metabolism via PLD6/MitoPLD. The polypeptide is Mitoguardin 1 (Mus musculus (Mouse)).